We begin with the raw amino-acid sequence, 428 residues long: Adenylosuccinate synthetase (428 aa).

GTP is bound by residues Gly12–Lys18 and Gly40–Thr42. Asp13 functions as the Proton acceptor in the catalytic mechanism. Residues Asp13 and Gly40 each coordinate Mg(2+). IMP contacts are provided by residues Asp13–Lys16, Asn38–His41, Thr129, Arg143, Gln224, Thr239, and Arg303. The active-site Proton donor is His41. Val299–Arg305 contacts substrate. GTP is bound by residues Arg305, Lys331–Asp333, and Gly413–Gly415.

The protein belongs to the adenylosuccinate synthetase family. As to quaternary structure, homodimer. Mg(2+) serves as cofactor.

The protein resides in the cytoplasm. The catalysed reaction is IMP + L-aspartate + GTP = N(6)-(1,2-dicarboxyethyl)-AMP + GDP + phosphate + 2 H(+). It participates in purine metabolism; AMP biosynthesis via de novo pathway; AMP from IMP: step 1/2. In terms of biological role, plays an important role in the de novo pathway of purine nucleotide biosynthesis. Catalyzes the first committed step in the biosynthesis of AMP from IMP. The sequence is that of Adenylosuccinate synthetase from Saccharopolyspora erythraea (strain ATCC 11635 / DSM 40517 / JCM 4748 / NBRC 13426 / NCIMB 8594 / NRRL 2338).